Here is a 413-residue protein sequence, read N- to C-terminus: Divalent metal cation transporter MntH (413 aa).

At 1 to 19 the chain is on the cytoplasmic side; sequence MTDNRVENSSGRAARKLRL. Residues 20–39 form a helical membrane-spanning segment; the sequence is ALMGPAFIAAIGYIDPGNFA. Over 40–51 the chain is Periplasmic; sequence TNIQAGASFGYQ. A helical membrane pass occupies residues 52 to 71; that stretch reads LLWVVVWANLMAMLIQILSA. The Cytoplasmic portion of the chain corresponds to 72 to 95; the sequence is KLGIATGKNLAEQIRDHYPRPVVW. The chain crosses the membrane as a helical span at residues 96-118; that stretch reads FYWVQAEIIAMATDLAEFIGAAI. Over 119–125 the chain is Periplasmic; it reads GFKLILG. The helical transmembrane segment at 126–145 threads the bilayer; sequence VSLLQGAVLTGIATFLILML. Residues 146 to 155 lie on the Cytoplasmic side of the membrane; it reads QRRGQKPLEK. A helical membrane pass occupies residues 156-175; it reads VIGGLLLFVAAAYIVELFFS. Topologically, residues 176-196 are periplasmic; it reads QPDMAQLGKGMVIPALPNPEA. The chain crosses the membrane as a helical span at residues 197 to 220; the sequence is VFLAAGVLGATIMPHVIYLHSSLT. At 221 to 238 the chain is on the cytoplasmic side; it reads QHLHGGTRQQRYSATKWD. A helical transmembrane segment spans residues 239-258; sequence VAIAMTIAGFVNLAMMATAA. Residues 259–276 lie on the Periplasmic side of the membrane; the sequence is AAFHFSGHTGIADLDQAY. The chain crosses the membrane as a helical span at residues 277 to 297; that stretch reads LTLEPLLSHAAATVFGLSLVA. Residues 298-327 lie on the Cytoplasmic side of the membrane; the sequence is AGLSSTVVGTLAGQVVMQGFVRFHIPLWVR. Residues 328 to 344 traverse the membrane as a helical segment; that stretch reads RTITMLPSFIVILMGLD. Residues 345-350 lie on the Periplasmic side of the membrane; it reads PTRILV. A helical transmembrane segment spans residues 351-370; that stretch reads MSQVLLSFGIALALVPLLIF. At 371 to 387 the chain is on the cytoplasmic side; the sequence is TSNATLMGELVNTRRVK. Residues 388–406 traverse the membrane as a helical segment; the sequence is QVGWIIVVLVVALNIWLLV. Residues 407–413 are Periplasmic-facing; it reads GTVMGLS.

It belongs to the NRAMP family.

The protein localises to the cell inner membrane. In terms of biological role, h(+)-stimulated, divalent metal cation uptake system. This Salmonella paratyphi C (strain RKS4594) protein is Divalent metal cation transporter MntH.